The chain runs to 341 residues: Putative UPF0607 protein FLJ37424 (341 aa).

Disordered regions lie at residues 72–131 (PKTE…NPRP) and 216–283 (GLLM…LPCL). The segment covering 79–101 (EEPKEATEVKDQVETQGQEDNKR) has biased composition (basic and acidic residues). Residues 108-127 (EAASTSRPLETQGNLTSSWY) show a composition bias toward polar residues. The segment covering 243-252 (AGHRSHKRKL) has biased composition (basic residues).

The protein belongs to the UPF0607 family.

The chain is Putative UPF0607 protein FLJ37424 from Homo sapiens (Human).